We begin with the raw amino-acid sequence, 244 residues long: MRMAGQDNIFAAPIEKLGDFTFDQKVAEVFPDMIQRSVPGYSNIISAIGMLAERFAKPHSKIYDLGCSLGAATLSMRRSIQQEGCEIIAVDNSAAMVERCRLHIDAYRSDTPVQVVEADIRNIDIADASVVVLNFTLQFLVPEDRQMLLEKIYAGLRPGGILILSEKYIFDDEQAHELLINLHHDFKRANGYSELEISQKRSAIENVMRPDSIDTHKKRLTEIGFSSTEVWFQCFNFGSMFAIK.

Residues tyrosine 41, 66–68 (GCS), 91–92 (DN), 119–120 (DI), asparagine 134, and arginine 201 contribute to the S-adenosyl-L-methionine site.

It belongs to the class I-like SAM-binding methyltransferase superfamily. Cx-SAM synthase family. As to quaternary structure, homodimer.

It catalyses the reaction prephenate + S-adenosyl-L-methionine = carboxy-S-adenosyl-L-methionine + 3-phenylpyruvate + H2O. Its function is as follows. Catalyzes the conversion of S-adenosyl-L-methionine (SAM) to carboxy-S-adenosyl-L-methionine (Cx-SAM). The protein is Carboxy-S-adenosyl-L-methionine synthase of Photobacterium profundum (strain SS9).